Consider the following 901-residue polypeptide: Probable dipeptidyl-aminopeptidase B (901 aa).

Residues 1 to 22 show a composition bias toward low complexity; it reads MSSPRPSTSSTSSDSGLSVDTT. A disordered region spans residues 1–67; sequence MSSPRPSTSS…EPFLPSAKKQ (67 aa). The Cytoplasmic segment spans residues 1–76; the sequence is MSSPRPSTSS…QAASGSRTSR (76 aa). A helical; Signal-anchor for type II membrane protein membrane pass occupies residues 77–97; that stretch reads LIWGLVILCVAGWLWGLVLFV. Over 98–901 the chain is Vacuolar; sequence TQNRSAQQSV…VKRSLPMLVK (804 aa). Asn334 and Asn625 each carry an N-linked (GlcNAc...) asparagine glycan. Ser739 (charge relay system) is an active-site residue. An N-linked (GlcNAc...) asparagine glycan is attached at Asn793. Catalysis depends on charge relay system residues Asp816 and His849.

It belongs to the peptidase S9B family.

It is found in the vacuole membrane. It catalyses the reaction Release of an N-terminal dipeptide, Xaa-Yaa-|-Zaa-, from a polypeptide, preferentially when Yaa is Pro, provided Zaa is neither Pro nor hydroxyproline.. Functionally, type IV dipeptidyl-peptidase which removes N-terminal dipeptides sequentially from polypeptides having unsubstituted N-termini provided that the penultimate residue is proline. The chain is Probable dipeptidyl-aminopeptidase B (dapB) from Aspergillus niger (strain ATCC MYA-4892 / CBS 513.88 / FGSC A1513).